Reading from the N-terminus, the 93-residue chain is DNA-directed RNA polymerase subunit omega (93 aa).

This sequence belongs to the RNA polymerase subunit omega family. As to quaternary structure, the RNAP catalytic core consists of 2 alpha, 1 beta, 1 beta' and 1 omega subunit. When a sigma factor is associated with the core the holoenzyme is formed, which can initiate transcription.

It carries out the reaction RNA(n) + a ribonucleoside 5'-triphosphate = RNA(n+1) + diphosphate. Its function is as follows. Promotes RNA polymerase assembly. Latches the N- and C-terminal regions of the beta' subunit thereby facilitating its interaction with the beta and alpha subunits. The protein is DNA-directed RNA polymerase subunit omega of Shewanella piezotolerans (strain WP3 / JCM 13877).